The following is a 68-amino-acid chain: Lividin-1 (68 aa).

Residues methionine 1 to cysteine 22 form the signal peptide. The propeptide occupies glutamine 23–glutamate 42. Cysteine 62 and cysteine 68 are disulfide-bonded.

As to expression, expressed by the skin glands.

Its subcellular location is the secreted. In terms of biological role, antimicrobial peptide. The chain is Lividin-1 from Odorrana livida (Green mountain frog).